Here is a 301-residue protein sequence, read N- to C-terminus: Acetylglutamate kinase (301 aa).

Residues 76 to 77 (GG), arginine 98, and asparagine 192 contribute to the substrate site.

This sequence belongs to the acetylglutamate kinase family. ArgB subfamily.

The protein localises to the cytoplasm. The enzyme catalyses N-acetyl-L-glutamate + ATP = N-acetyl-L-glutamyl 5-phosphate + ADP. The protein operates within amino-acid biosynthesis; L-arginine biosynthesis; N(2)-acetyl-L-ornithine from L-glutamate: step 2/4. Functionally, catalyzes the ATP-dependent phosphorylation of N-acetyl-L-glutamate. This Chlorobaculum parvum (strain DSM 263 / NCIMB 8327) (Chlorobium vibrioforme subsp. thiosulfatophilum) protein is Acetylglutamate kinase.